A 130-amino-acid chain; its full sequence is Small ribosomal subunit protein uS8 (130 aa).

Belongs to the universal ribosomal protein uS8 family. In terms of assembly, part of the 30S ribosomal subunit.

One of the primary rRNA binding proteins, it binds directly to 16S rRNA central domain where it helps coordinate assembly of the platform of the 30S subunit. The protein is Small ribosomal subunit protein uS8 of Caldivirga maquilingensis (strain ATCC 700844 / DSM 13496 / JCM 10307 / IC-167).